The chain runs to 90 residues: Cell division topological specificity factor 2 (90 aa).

This sequence belongs to the MinE family.

Functionally, prevents the cell division inhibition by proteins MinC and MinD at internal division sites while permitting inhibition at polar sites. This ensures cell division at the proper site by restricting the formation of a division septum at the midpoint of the long axis of the cell. The sequence is that of Cell division topological specificity factor 2 from Syntrophomonas wolfei subsp. wolfei (strain DSM 2245B / Goettingen).